We begin with the raw amino-acid sequence, 94 residues long: Selenoprotein K (94 aa).

Residues 20–42 (LSLITDFFWGIAEFVVLFFKTLL) traverse the membrane as a helical segment. A disordered region spans residues 48–94 (KRRSYGNSSDSRYDDGRGPPGNPPRRMGRINHLRGPSPPPMAGGUGR). A non-standard amino acid (selenocysteine) is located at residue selenocysteine 92.

Belongs to the selenoprotein K family. As to quaternary structure, interacts with DERL1, DERL2, DERL3 and SELENOS. The SELENOK-SELENOS complex interacts with VCP. Interacts with ZDHHC6. Cleaved by CAPN2/m-calpain in resting macrophages but not in activated macrophages. Macrophage activation up-regulates expression of the calpain inhibitor CAST/calpastatin, resulting in inhibition of CAPN2 activity. In terms of processing, truncated SELENOK proteins produced by failed UGA/Sec decoding are ubiquitinated by the CRL2(KLHDC2) complex, which recognizes the diglycine (Gly-Gly) at the C-terminus of truncated SELENOK proteins. Highly expressed in heart.

It localises to the endoplasmic reticulum membrane. Its subcellular location is the cell membrane. Its function is as follows. Required for Ca(2+) flux in immune cells and plays a role in T-cell proliferation and in T-cell and neutrophil migration. Involved in endoplasmic reticulum-associated degradation (ERAD) of soluble glycosylated proteins. Required for palmitoylation and cell surface expression of CD36 and involved in macrophage uptake of low-density lipoprotein and in foam cell formation. Together with ZDHHC6, required for palmitoylation of ITPR1 in immune cells, leading to regulate ITPR1 stability and function. Plays a role in protection of cells from ER stress-induced apoptosis. Protects cells from oxidative stress when overexpressed in cardiomyocytes. This is Selenoprotein K from Homo sapiens (Human).